Here is a 300-residue protein sequence, read N- to C-terminus: Fructose-bisphosphate aldolase class 1 (300 aa).

The active-site Proton acceptor is Glu181. The active-site Schiff-base intermediate with dihydroxyacetone-P is the Lys218.

The protein belongs to the class I fructose-bisphosphate aldolase family.

It carries out the reaction beta-D-fructose 1,6-bisphosphate = D-glyceraldehyde 3-phosphate + dihydroxyacetone phosphate. The protein operates within carbohydrate degradation; glycolysis; D-glyceraldehyde 3-phosphate and glycerone phosphate from D-glucose: step 4/4. This chain is Fructose-bisphosphate aldolase class 1 (fda), found in Synechocystis sp. (strain ATCC 27184 / PCC 6803 / Kazusa).